The primary structure comprises 284 residues: Cytochrome P450 2C31 (284 aa).

A heme-binding site is contributed by Cys229.

Belongs to the cytochrome P450 family. The cofactor is heme.

Its subcellular location is the endoplasmic reticulum membrane. It is found in the microsome membrane. The catalysed reaction is an organic molecule + reduced [NADPH--hemoprotein reductase] + O2 = an alcohol + oxidized [NADPH--hemoprotein reductase] + H2O + H(+). Its function is as follows. Cytochromes P450 are a group of heme-thiolate monooxygenases. In liver microsomes, this enzyme is involved in an NADPH-dependent electron transport pathway. It oxidizes a variety of structurally unrelated compounds, including steroids, fatty acids, and xenobiotics. This Capra hircus aegagrus (Wild goat) protein is Cytochrome P450 2C31 (CYP2C31).